The following is a 506-amino-acid chain: 2-isopropylmalate synthase (506 aa).

The region spanning 4-266 is the Pyruvate carboxyltransferase domain; it reads ILFMDTTLRD…EPSMTLKEIK (263 aa). Aspartate 13, histidine 201, histidine 203, and asparagine 237 together coordinate Mn(2+). The tract at residues 390–506 is regulatory domain; sequence NITQLQVHFV…KLKSFIQLVK (117 aa).

Belongs to the alpha-IPM synthase/homocitrate synthase family. LeuA type 1 subfamily. In terms of assembly, homodimer. The cofactor is Mn(2+).

The protein resides in the cytoplasm. The catalysed reaction is 3-methyl-2-oxobutanoate + acetyl-CoA + H2O = (2S)-2-isopropylmalate + CoA + H(+). It participates in amino-acid biosynthesis; L-leucine biosynthesis; L-leucine from 3-methyl-2-oxobutanoate: step 1/4. Functionally, catalyzes the condensation of the acetyl group of acetyl-CoA with 3-methyl-2-oxobutanoate (2-ketoisovalerate) to form 3-carboxy-3-hydroxy-4-methylpentanoate (2-isopropylmalate). The polypeptide is 2-isopropylmalate synthase (Bacillus cereus (strain ZK / E33L)).